Reading from the N-terminus, the 531-residue chain is Laccase-4 (531 aa).

An N-terminal signal peptide occupies residues methionine 1 to phenylalanine 19. Plastocyanin-like domains follow at residues arginine 23–tyrosine 146, valine 158–glutamate 315, and serine 384–arginine 507. An N-linked (GlcNAc...) asparagine glycan is attached at asparagine 66. Cu cation is bound by residues histidine 83 and histidine 85. A disulfide bridge connects residues cysteine 104 and cysteine 528. N-linked (GlcNAc...) asparagine glycosylation occurs at asparagine 109. Residues histidine 128 and histidine 130 each contribute to the Cu cation site. Residues asparagine 186, asparagine 231, asparagine 280, and asparagine 395 are each glycosylated (N-linked (GlcNAc...) asparagine). 6 residues coordinate Cu cation: histidine 427, histidine 430, histidine 432, histidine 479, cysteine 480, and histidine 481.

The protein belongs to the multicopper oxidase family. As to quaternary structure, homodimer. It depends on Cu cation as a cofactor. In terms of tissue distribution, in mycelia, at a higher level than LCC1, LCC2 and LCC3.

The protein resides in the secreted. The catalysed reaction is 4 hydroquinone + O2 = 4 benzosemiquinone + 2 H2O. In terms of biological role, lignin degradation and detoxification of lignin-derived products. The polypeptide is Laccase-4 (LCC4) (Thanatephorus cucumeris (Black scurf of potato)).